Here is a 178-residue protein sequence, read N- to C-terminus: Endothelin-2 (178 aa).

An N-terminal signal peptide occupies residues 1 to 24 (MVSVPTAWCSVALALLVALHEGKD). A propeptide spanning residues 25-46 (QAAATLEQPASSPRARAAHLRL) is cleaved from the precursor. Disulfide bonds link C49–C63 and C51–C59. A propeptide spanning residues 70–178 (VNTPGQTAPY…RTTHSRHRKR (109 aa)) is cleaved from the precursor. The interval 96–111 (CECSSARDPACATFCH) is endothelin-like. The interval 154-178 (KTHFAKRQQEATREPRTTHSRHRKR) is disordered. Basic and acidic residues predominate over residues 160-170 (RQQEATREPRT).

Belongs to the endothelin/sarafotoxin family.

The protein resides in the secreted. In terms of biological role, endothelins are endothelium-derived vasoconstrictor peptides. This Oryctolagus cuniculus (Rabbit) protein is Endothelin-2 (EDN2).